We begin with the raw amino-acid sequence, 350 residues long: S-adenosylmethionine:tRNA ribosyltransferase-isomerase (350 aa).

The protein belongs to the QueA family. In terms of assembly, monomer.

The protein resides in the cytoplasm. The catalysed reaction is 7-aminomethyl-7-carbaguanosine(34) in tRNA + S-adenosyl-L-methionine = epoxyqueuosine(34) in tRNA + adenine + L-methionine + 2 H(+). The protein operates within tRNA modification; tRNA-queuosine biosynthesis. In terms of biological role, transfers and isomerizes the ribose moiety from AdoMet to the 7-aminomethyl group of 7-deazaguanine (preQ1-tRNA) to give epoxyqueuosine (oQ-tRNA). The polypeptide is S-adenosylmethionine:tRNA ribosyltransferase-isomerase (Aliivibrio fischeri (strain MJ11) (Vibrio fischeri)).